We begin with the raw amino-acid sequence, 673 residues long: MSKPFKLNSAFKPSGDQPEAIRRLEEGLEDGLAHQTLLGVTGSGKTFTIANVIADLQRPTMVLAPNKTLAAQLYGEMKEFFPDNAVEYFVSYYDYYQPEAYVPSSDTFIEKDASVNEHIEQMRLSATKALLERRDVVVVASVSAIYGLGDPDLYLKMMLHLTVGMIIDQRAILRRLAELQYTRNDQAFQRGTFRVRGEVIDIFPAESDDIALRVELFDEEVERLSLFDPLTGQVESTIQRYTIYPKTHYVTPRERIVQAMEEIKDELVDRRRIMQENNKLLEEQRLTQRTQFDLEMMNELGYCSGIENYSRYLSGRGPGEPPPTLFDYLPADGLLVVDESHVTIPQIGGMFRGDRARKETLVEYGFRLPSALDNRPLKFEEFEALAPQTIYVSATPGNYELEKSGGEVVDQVVRPTGLLDPIIEVRPVATQVDDLLSEIRLRAAINERVLVTTLTKRMAEDLTEYLEEHGERVRYLHSDIDTVERMEIIRDLRLGEFDVLVGINLLREGLDMPEVSLVAILDADKEGFLRSERSLIQTIGRAARNVNGKAILYGDKITPSMAKAIGETERRREKQQLYNEEHGIVPQGLNKKVVDILALGQNIAKTKAKGKGKSRAAAKSGVVEMDMTPKALQQKIHELEGQMMQHAQNLEFEEAAEIRDQLHQLRELFIAAS.

The Helicase ATP-binding domain maps to 26–183 (EGLEDGLAHQ…RRLAELQYTR (158 aa)). 39–46 (GVTGSGKT) serves as a coordination point for ATP. Residues 92 to 115 (YYDYYQPEAYVPSSDTFIEKDASV) carry the Beta-hairpin motif. Positions 431 to 597 (QVDDLLSEIR…GLNKKVVDIL (167 aa)) constitute a Helicase C-terminal domain. The 36-residue stretch at 633 to 668 (QQKIHELEGQMMQHAQNLEFEEAAEIRDQLHQLREL) folds into the UVR domain.

This sequence belongs to the UvrB family. Forms a heterotetramer with UvrA during the search for lesions. Interacts with UvrC in an incision complex.

The protein resides in the cytoplasm. In terms of biological role, the UvrABC repair system catalyzes the recognition and processing of DNA lesions. A damage recognition complex composed of 2 UvrA and 2 UvrB subunits scans DNA for abnormalities. Upon binding of the UvrA(2)B(2) complex to a putative damaged site, the DNA wraps around one UvrB monomer. DNA wrap is dependent on ATP binding by UvrB and probably causes local melting of the DNA helix, facilitating insertion of UvrB beta-hairpin between the DNA strands. Then UvrB probes one DNA strand for the presence of a lesion. If a lesion is found the UvrA subunits dissociate and the UvrB-DNA preincision complex is formed. This complex is subsequently bound by UvrC and the second UvrB is released. If no lesion is found, the DNA wraps around the other UvrB subunit that will check the other stand for damage. This chain is UvrABC system protein B, found in Citrobacter koseri (strain ATCC BAA-895 / CDC 4225-83 / SGSC4696).